The following is a 141-amino-acid chain: Nucleoside diphosphate kinase (141 aa).

ATP contacts are provided by Lys-10, Phe-58, Arg-86, Thr-92, Arg-103, and Asn-113. His-116 acts as the Pros-phosphohistidine intermediate in catalysis.

It belongs to the NDK family. As to quaternary structure, homotetramer. Requires Mg(2+) as cofactor.

It is found in the cytoplasm. It carries out the reaction a 2'-deoxyribonucleoside 5'-diphosphate + ATP = a 2'-deoxyribonucleoside 5'-triphosphate + ADP. The enzyme catalyses a ribonucleoside 5'-diphosphate + ATP = a ribonucleoside 5'-triphosphate + ADP. Major role in the synthesis of nucleoside triphosphates other than ATP. The ATP gamma phosphate is transferred to the NDP beta phosphate via a ping-pong mechanism, using a phosphorylated active-site intermediate. The sequence is that of Nucleoside diphosphate kinase from Hydrogenovibrio crunogenus (strain DSM 25203 / XCL-2) (Thiomicrospira crunogena).